A 450-amino-acid chain; its full sequence is Phosphoglucosamine mutase (450 aa).

Catalysis depends on Ser-102, which acts as the Phosphoserine intermediate. 4 residues coordinate Mg(2+): Ser-102, Asp-244, Asp-246, and Asp-248. Residue Ser-102 is modified to Phosphoserine.

It belongs to the phosphohexose mutase family. It depends on Mg(2+) as a cofactor. Post-translationally, activated by phosphorylation.

The enzyme catalyses alpha-D-glucosamine 1-phosphate = D-glucosamine 6-phosphate. Functionally, catalyzes the conversion of glucosamine-6-phosphate to glucosamine-1-phosphate. The polypeptide is Phosphoglucosamine mutase (Nitratidesulfovibrio vulgaris (strain DSM 19637 / Miyazaki F) (Desulfovibrio vulgaris)).